Reading from the N-terminus, the 129-residue chain is Iron-sulfur cluster assembly 1 homolog, mitochondrial (129 aa).

A mitochondrion-targeting transit peptide spans 1 to 12 (MASSVVRATVRA). Fe cation contacts are provided by cysteine 57, cysteine 121, and cysteine 123.

The protein belongs to the HesB/IscA family.

Its subcellular location is the mitochondrion. In terms of biological role, involved in the maturation of mitochondrial 4Fe-4S proteins functioning late in the iron-sulfur cluster assembly pathway. Probably involved in the binding of an intermediate of Fe/S cluster assembly. In Gallus gallus (Chicken), this protein is Iron-sulfur cluster assembly 1 homolog, mitochondrial (ISCA1).